A 737-amino-acid polypeptide reads, in one-letter code: Genome polyprotein (737 aa).

S2 bears the N-acetylserine; by host mark. Positions 2-23 (STNPKPQRKTKRNTNRRPQDVK) are interaction with STAT1. Residues 2–58 (STNPKPQRKTKRNTNRRPQDVKFPGGGQIVGGVYLLPRRGPRLGVRATRKTSERSQP) form an interaction with EIF2AK2/PKR region. The interval 2 to 59 (STNPKPQRKTKRNTNRRPQDVKFPGGGQIVGGVYLLPRRGPRLGVRATRKTSERSQPR) is interaction with DDX3X. Residues 2–75 (STNPKPQRKT…PKDRRSTGKS (74 aa)) form a disordered region. Topologically, residues 2–168 (STNPKPQRKT…EDGINYATGN (167 aa)) are cytoplasmic. 2 short sequence motifs (nuclear localization signal) span residues 5-13 (PKPQRKTKR) and 38-43 (PRRGPR). Residues 7–16 (PQRKTKRNTN) show a composition bias toward basic residues. Low complexity predominate over residues 32 to 47 (GGVYLLPRRGPRLGVR). S53 bears the Phosphoserine; by host mark. 2 short sequence motifs (nuclear localization signal) span residues 58–64 (PRGRRQP) and 66–71 (PKDRRS). 2 positions are modified to phosphoserine; by host: S99 and S116. The important for endoplasmic reticulum and mitochondrial localization stretch occupies residues 112 to 152 (PRHRSRNLGKVIDTLTCGFADLMGYIPVVGAPVGGVARALA). An interaction with APOA2 region spans residues 122 to 173 (VIDTLTCGFADLMGYIPVVGAPVGGVARALAHGVRVLEDGINYATGNLPGCS). The important for lipid droplets localization stretch occupies residues 164 to 167 (YATG). The chain crosses the membrane as a helical span at residues 169–189 (LPGCSFSIFLLALLSCVTVPV). A propeptide spans 178–191 (LLALLSCVTVPVSA) (ER anchor for the core protein, removed in mature form by host signal peptidase). Topologically, residues 190–358 (SAVEVRNISS…FGGHWGVVFG (169 aa)) are lumenal. Residues N196, N209, and N233 are each glycosylated (N-linked (GlcNAc...) asparagine; by host). The tract at residues 265–296 (IVMAATVCSALYVGDICGAVMIASQAFIISPE) is important for fusion. A glycan (N-linked (GlcNAc...) asparagine; by host) is linked at N305. Residues 359 to 379 (LAYFSMQGAWAKVIAILLLVA) traverse the membrane as a helical segment. The Lumenal portion of the chain corresponds to 380-729 (GVDASTQVTG…WEWVILLFLL (350 aa)). An HVR1 region spans residues 385-411 (TQVTGGQAAHTVRGVASIFSPGSRQDI). Residues N417, N423, N430, and N448 are each glycosylated (N-linked (GlcNAc...) (high mannose) asparagine; by host). 4 disulfide bridges follow: C429-C554, C452-C459, C488-C496, and C505-C510. Positions 474 to 481 (YETNVTNE) are HVR2. The CD81-binding 1 stretch occupies residues 482 to 495 (EDMRPYCWHYPPKP). An N-linked (GlcNAc...) asparagine; by host glycan is attached at N542. Residues 546–553 (PPRGAWFG) form a CD81-binding 2 region. A glycan (N-linked (GlcNAc...) (high mannose) asparagine; by host) is linked at N558. Cystine bridges form between C566–C571, C585–C589, C601–C624, and C611–C648. N-linked (GlcNAc...) (high mannose) asparagine; by host glycans are attached at residues N627 and N649. A disulfide bridge links C656 with C681. Positions 664-675 (SQQSPLLHSTTE) are PKR/eIF2-alpha phosphorylation homology domain (PePHD). Residues 730–737 (LADARVCA) traverse the membrane as a helical segment.

Belongs to the hepacivirus polyprotein family. In terms of assembly, homooligomer. Interacts with E1 (via C-terminus). Interacts with the non-structural protein 5A. Interacts (via N-terminus) with host STAT1 (via SH2 domain); this interaction results in decreased STAT1 phosphorylation and ubiquitin-mediated proteasome-dependent STAT1 degradation, leading to decreased IFN-stimulated gene transcription. Interacts with host STAT3; this interaction constitutively activates STAT3. Interacts with host LTBR receptor. Interacts with host TNFRSF1A receptor and possibly induces apoptosis. Interacts with host HNRPK. Interacts with host YWHAE. Interacts with host UBE3A/E6AP. Interacts with host DDX3X. Interacts with host APOA2. Interacts with host RXRA protein. Interacts with host SP110 isoform 3/Sp110b; this interaction sequesters the transcriptional corepressor SP110 away from the nucleus. Interacts with host CREB3 nuclear transcription protein; this interaction triggers cell transformation. Interacts with host ACY3. Interacts with host C1QR1. Interacts with host RBM24; this interaction, which enhances the interaction of the mature core protein with 5'-UTR, may inhibit viral translation and favor replication. Interacts with host EIF2AK2/PKR; this interaction induces the autophosphorylation of EIF2AK2. Part of the viral assembly initiation complex composed of NS2, E1, E2, NS3, NS4A, NS5A and the mature core protein. Forms a heterodimer with envelope glycoprotein E2. Interacts with mature core protein. Interacts with protease NS2. The heterodimer E1/E2 interacts with host CLDN1; this interaction plays a role in viral entry into host cell. Interacts with host SPSB2 (via C-terminus). Part of the viral assembly initiation complex composed of NS2, E1, E2, NS3, NS4A, NS5A and the mature core protein. As to quaternary structure, forms a heterodimer with envelope glycoprotein E1. Interacts with host CD81 and SCARB1 receptors; these interactions play a role in viral entry into host cell. Interacts with host EIF2AK2/PKR; this interaction inhibits EIF2AK2 and probably allows the virus to evade the innate immune response. Interacts with host CD209/DC-SIGN and CLEC4M/DC-SIGNR. Interact with host SPCS1; this interaction is essential for viral particle assembly. Interacts with protease NS2. The heterodimer E1/E2 interacts with host CLDN1; this interaction plays a role in viral entry into host cell. Part of the viral assembly initiation complex composed of NS2, E1, E2, NS3, NS4A, NS5A and the mature core protein. Specific enzymatic cleavages in vivo yield mature proteins. The structural proteins, core, E1, E2 and p7 are produced by proteolytic processing by host signal peptidases. The core protein precursor is synthesized as a 23 kDa, which is retained in the ER membrane through the hydrophobic signal peptide. Cleavage by the signal peptidase releases the 21 kDa mature core protein. The cleavage of the core protein precursor occurs between aminoacids 176 and 188 but the exact cleavage site is not known. Some degraded forms of the core protein appear as well during the course of infection. The other proteins (p7, NS2, NS3, NS4A, NS4B, NS5A and NS5B) are cleaved by the viral proteases. Autoprocessing between NS2 and NS3 is mediated by the NS2 cysteine protease catalytic domain and regulated by the NS3 N-terminal domain. In terms of processing, phosphorylated by host PKC and PKA. Post-translationally, ubiquitinated; mediated by UBE3A and leading to core protein subsequent proteasomal degradation. Highly N-glycosylated.

It is found in the host endoplasmic reticulum membrane. The protein resides in the host mitochondrion membrane. It localises to the virion. Its subcellular location is the host cytoplasm. The protein localises to the host nucleus. It is found in the host lipid droplet. The protein resides in the virion membrane. In terms of biological role, packages viral RNA to form a viral nucleocapsid, and promotes virion budding. Participates in the viral particle production as a result of its interaction with the non-structural protein 5A. Binds RNA and may function as a RNA chaperone to induce the RNA structural rearrangements taking place during virus replication. Modulates viral translation initiation by interacting with viral IRES and 40S ribosomal subunit. Affects various cell signaling pathways, host immunity and lipid metabolism. Prevents the establishment of cellular antiviral state by blocking the interferon-alpha/beta (IFN-alpha/beta) and IFN-gamma signaling pathways and by blocking the formation of phosphorylated STAT1 and promoting ubiquitin-mediated proteasome-dependent degradation of STAT1. Activates STAT3 leading to cellular transformation. Regulates the activity of cellular genes, including c-myc and c-fos. May repress the promoter of p53, and sequester CREB3 and SP110 isoform 3/Sp110b in the cytoplasm. Represses cell cycle negative regulating factor CDKN1A, thereby interrupting an important check point of normal cell cycle regulation. Targets transcription factors involved in the regulation of inflammatory responses and in the immune response: suppresses TNF-induced NF-kappa-B activation, and activates AP-1. Binds to dendritic cells (DCs) via C1QR1, resulting in down-regulation of T-lymphocytes proliferation. Alters lipid metabolism by interacting with hepatocellular proteins involved in lipid accumulation and storage. Induces up-regulation of FAS promoter activity, and thereby contributes to the increased triglyceride accumulation in hepatocytes (steatosis). Forms a heterodimer with envelope glycoprotein E2, which mediates virus attachment to the host cell, virion internalization through clathrin-dependent endocytosis and fusion with host membrane. Fusion with the host cell is most likely mediated by both E1 and E2, through conformational rearrangements of the heterodimer required for fusion rather than a classical class II fusion mechanism. E1/E2 heterodimer binds host apolipoproteins such as APOB and ApoE thereby forming a lipo-viro-particle (LVP). APOE associated to the LVP allows the initial virus attachment to cell surface receptors such as the heparan sulfate proteoglycans (HSPGs), syndecan-1 (SDC1), syndecan-1 (SDC2), the low-density lipoprotein receptor (LDLR) and scavenger receptor class B type I (SCARB1). The cholesterol transfer activity of SCARB1 allows E2 exposure and binding of E2 to SCARB1 and the tetraspanin CD81. E1/E2 heterodimer binding on CD81 activates the epithelial growth factor receptor (EGFR) signaling pathway. Diffusion of the complex E1-E2-EGFR-SCARB1-CD81 to the cell lateral membrane allows further interaction with Claudin 1 (CLDN1) and occludin (OCLN) to finally trigger HCV entry. Functionally, forms a heterodimer with envelope glycoprotein E1, which mediates virus attachment to the host cell, virion internalization through clathrin-dependent endocytosis and fusion with host membrane. Fusion with the host cell is most likely mediated by both E1 and E2, through conformational rearrangements of the heterodimer required for fusion rather than a classical class II fusion mechanism. The interaction between envelope glycoprotein E2 and host apolipoprotein E/APOE allows the proper assembly, maturation and infectivity of the viral particles. This interaction is probably promoted via the up-regulation of cellular autophagy by the virus. E1/E2 heterodimer binds host apolipoproteins such as APOB and APOE thereby forming a lipo-viro-particle (LVP). APOE associated to the LVP allows the initial virus attachment to cell surface receptors such as the heparan sulfate proteoglycans (HSPGs), syndecan-1 (SDC1), syndecan-1 (SDC2), the low-density lipoprotein receptor (LDLR) and scavenger receptor class B type I (SCARB1). The cholesterol transfer activity of SCARB1 allows E2 exposure and binding of E2 to SCARB1 and the tetraspanin CD81. E1/E2 heterodimer binding on CD81 activates the epithelial growth factor receptor (EGFR) signaling pathway. Diffusion of the complex E1-E2-EGFR-SCARB1-CD81 to the cell lateral membrane allows further interaction with Claudin 1 (CLDN1) and occludin (OCLN) to finally trigger HCV entry. Inhibits host EIF2AK2/PKR activation, preventing the establishment of an antiviral state. Viral ligand for CD209/DC-SIGN and CLEC4M/DC-SIGNR, which are respectively found on dendritic cells (DCs), and on liver sinusoidal endothelial cells and macrophage-like cells of lymph node sinuses. These interactions allow the capture of circulating HCV particles by these cells and subsequent facilitated transmission to permissive cells such as hepatocytes and lymphocyte subpopulations. In Hepatitis C virus (isolate HC-J7) (HCV), this protein is Genome polyprotein.